Here is a 424-residue protein sequence, read N- to C-terminus: Gamma-glutamyl phosphate reductase (424 aa).

It belongs to the gamma-glutamyl phosphate reductase family.

The protein localises to the cytoplasm. It catalyses the reaction L-glutamate 5-semialdehyde + phosphate + NADP(+) = L-glutamyl 5-phosphate + NADPH + H(+). It functions in the pathway amino-acid biosynthesis; L-proline biosynthesis; L-glutamate 5-semialdehyde from L-glutamate: step 2/2. Catalyzes the NADPH-dependent reduction of L-glutamate 5-phosphate into L-glutamate 5-semialdehyde and phosphate. The product spontaneously undergoes cyclization to form 1-pyrroline-5-carboxylate. This chain is Gamma-glutamyl phosphate reductase, found in Halorhodospira halophila (strain DSM 244 / SL1) (Ectothiorhodospira halophila (strain DSM 244 / SL1)).